A 107-amino-acid polypeptide reads, in one-letter code: ATP-dependent Clp protease adapter protein ClpS (107 aa).

The tract at residues 1–20 is disordered; that stretch reads MAQKHEHDTSVITESAPKQK.

It belongs to the ClpS family. In terms of assembly, binds to the N-terminal domain of the chaperone ClpA.

Involved in the modulation of the specificity of the ClpAP-mediated ATP-dependent protein degradation. This is ATP-dependent Clp protease adapter protein ClpS from Myxococcus xanthus (strain DK1622).